The following is a 138-amino-acid chain: Protein FAM136A (138 aa).

The protein belongs to the FAM136 family.

The sequence is that of Protein FAM136A (fam136a) from Xenopus laevis (African clawed frog).